The primary structure comprises 750 residues: Cullin-5 (750 aa).

Residues 678 to 739 (RFFKLQAAIV…QEYIRRTTDD (62 aa)) form the Cullin neddylation domain. Lys691 is covalently cross-linked (Glycyl lysine isopeptide (Lys-Gly) (interchain with G-Cter in NEDD8)).

Belongs to the cullin family. In terms of processing, neddylated; which enhances the ubiquitination activity of SCF-like complex.

The protein operates within protein modification; protein ubiquitination. Functionally, probable core component of cullin-based SCF-like E3 ubiquitin-protein ligase complexes which mediate the ubiquitination and subsequent proteasomal degradation of target proteins. The E3 ubiquitin-protein ligase activity of the complex is dependent on the neddylation of the cullin subunit. This Dictyostelium discoideum (Social amoeba) protein is Cullin-5 (culE).